A 495-amino-acid chain; its full sequence is Ribosome biogenesis protein YTM1 (495 aa).

Residues 15–97 (VKVIFTTTEP…ETTLTLQYVR (83 aa)) are ubiquitin-like (UBL) domain. WD repeat units lie at residues 129-168 (WSSAANSSAAVQPGQERVLSASYDGLLRIWNASGSVIATS), 175-213 (GHTASIKAAKFLTSDRLASAGMDRTVRVWKYTESDHFTG), 223-262 (GHTGSVDWLDVDGHSKHILTASADGAIGFWSASKASAPEP), 264-295 (ASLLPGAHVSKRRKATSSVSTAQRGPLGLWSI), 296-337 (HTAP…STLT), 386-426 (GHAN…PATK), and 458-495 (GDGCKVFSVVWDKLGIFSGGEDKKVQVNRGRNIVTEQK).

It belongs to the WD repeat WDR12/YTM1 family. As to quaternary structure, component of the NOP7 complex, composed of ERB1, NOP7 and YTM1. The complex is held together by ERB1, which interacts with NOP7 via its N-terminal domain and with YTM1 via a high-affinity interaction between the seven-bladed beta-propeller domains of the 2 proteins. The NOP7 complex associates with the 66S pre-ribosome. Interacts (via UBL domain) with MDN1 (via VWFA/MIDAS domain).

The protein resides in the nucleus. It localises to the nucleolus. Its subcellular location is the nucleoplasm. In terms of biological role, component of the NOP7 complex, which is required for maturation of the 25S and 5.8S ribosomal RNAs and formation of the 60S ribosome. The chain is Ribosome biogenesis protein YTM1 from Chaetomium thermophilum (strain DSM 1495 / CBS 144.50 / IMI 039719) (Thermochaetoides thermophila).